The following is a 151-amino-acid chain: Large ribosomal subunit protein eL8 (151 aa).

Belongs to the eukaryotic ribosomal protein eL8 family. In terms of assembly, part of the 50S ribosomal subunit. Probably part of the RNase P complex.

It is found in the cytoplasm. In terms of biological role, multifunctional RNA-binding protein that recognizes the K-turn motif in ribosomal RNA, the RNA component of RNase P, box H/ACA, box C/D and box C'/D' sRNAs. This Pyrobaculum aerophilum (strain ATCC 51768 / DSM 7523 / JCM 9630 / CIP 104966 / NBRC 100827 / IM2) protein is Large ribosomal subunit protein eL8.